The following is a 159-amino-acid chain: Ribosomal RNA large subunit methyltransferase H (159 aa).

S-adenosyl-L-methionine is bound by residues Leu76, Gly108, and 127–132; that span reads MSKMTF.

Belongs to the RNA methyltransferase RlmH family. As to quaternary structure, homodimer.

Its subcellular location is the cytoplasm. It catalyses the reaction pseudouridine(1915) in 23S rRNA + S-adenosyl-L-methionine = N(3)-methylpseudouridine(1915) in 23S rRNA + S-adenosyl-L-homocysteine + H(+). Its function is as follows. Specifically methylates the pseudouridine at position 1915 (m3Psi1915) in 23S rRNA. The sequence is that of Ribosomal RNA large subunit methyltransferase H from Ureaplasma parvum serovar 3 (strain ATCC 27815 / 27 / NCTC 11736).